The chain runs to 267 residues: Large ribosomal subunit protein bL9m (267 aa).

The transit peptide at 1 to 52 (MAAPVVTAPGRALLRAGAGRLLRGGVQELLRPRHEGNAPDLACNFSLSQNRG) directs the protein to the mitochondrion.

Belongs to the bacterial ribosomal protein bL9 family. As to quaternary structure, component of the mitochondrial large ribosomal subunit (mt-LSU). Mature mammalian 55S mitochondrial ribosomes consist of a small (28S) and a large (39S) subunit. The 28S small subunit contains a 12S ribosomal RNA (12S mt-rRNA) and 30 different proteins. The 39S large subunit contains a 16S rRNA (16S mt-rRNA), a copy of mitochondrial valine transfer RNA (mt-tRNA(Val)), which plays an integral structural role, and 52 different proteins.

It is found in the mitochondrion. The protein is Large ribosomal subunit protein bL9m (MRPL9) of Homo sapiens (Human).